The primary structure comprises 235 residues: Serine protease SplA (235 aa).

The N-terminal stretch at 1 to 35 (MNENVMVKGLTALTILTSLGFAENISNQPHSIAKA) is a signal peptide. Residues His74, Asp113, and Ser189 each act as charge relay system in the active site.

This sequence belongs to the peptidase S1B family.

It localises to the secreted. This Staphylococcus aureus (strain MSSA476) protein is Serine protease SplA (splA).